A 343-amino-acid polypeptide reads, in one-letter code: UPF0157 protein YqkA (343 aa).

The N-acetyltransferase domain maps to K8–S144. Residues V135 to L343 form a UPF0157 region.

In the C-terminal section; belongs to the UPF0157 (GrpB) family.

This chain is UPF0157 protein YqkA (yqkA), found in Bacillus subtilis (strain 168).